Reading from the N-terminus, the 311-residue chain is MNRGANSDSIPTDLIYEILSRLSVKPITRFRCVSKLWESIICRQDFTELFHNRSSSNPRLLIGVIQGGEWNFFSSPQPQNHYGKSSLVVAADSHMKFSEDKRPRYYSYASGLLYFPNIRISNHNDDVVRVICNPSTRQYAILPPDLRTRYRDSGRLFRNKLGVINLEDDYDGGYLLKLRMFVLEDFEKQKWTTYVHTLRDENKIKDNDNVYVVGATASGQIVLARNKAYKPFYVFYFNPEKSTLQSVEIQGVREEEDWFHRVYYFVDHVEDLRFDVMKTTYAATSIRPAEQNTSTSSREDHLVRTVKRKRA.

The F-box domain occupies 4 to 53 (GANSDSIPTDLIYEILSRLSVKPITRFRCVSKLWESIICRQDFTELFHNR). Positions 287-311 (RPAEQNTSTSSREDHLVRTVKRKRA) are disordered.

In Arabidopsis thaliana (Mouse-ear cress), this protein is Putative F-box protein At1g31090.